The primary structure comprises 300 residues: Protein ARMCX6 (300 aa).

Topologically, residues 1-6 (MGRARE) are mitochondrial intermembrane. Mitochondrion outer membrane (MOM)-targeting sequence regions lie at residues 1 to 6 (MGRARE) and 26 to 36 (KLTIGRDDSEK). Residues 7–27 (VGWMAAGLMIGAGACYCVYKL) traverse the membrane as a helical; Signal-anchor segment. At 28 to 300 (TIGRDDSEKL…REILLETPAP (273 aa)) the chain is on the cytoplasmic side. Disordered regions lie at residues 35–54 (EKLE…LDEE) and 69–99 (WTED…RAHP).

Belongs to the eutherian X-chromosome-specific Armcx family.

The protein localises to the mitochondrion. The protein resides in the mitochondrion outer membrane. May regulate the dynamics and distribution of mitochondria in neural cells. In Homo sapiens (Human), this protein is Protein ARMCX6 (ARMCX6).